We begin with the raw amino-acid sequence, 282 residues long: 2-dehydro-3-deoxyphosphooctonate aldolase (282 aa).

This sequence belongs to the KdsA family.

The protein resides in the cytoplasm. It catalyses the reaction D-arabinose 5-phosphate + phosphoenolpyruvate + H2O = 3-deoxy-alpha-D-manno-2-octulosonate-8-phosphate + phosphate. It functions in the pathway carbohydrate biosynthesis; 3-deoxy-D-manno-octulosonate biosynthesis; 3-deoxy-D-manno-octulosonate from D-ribulose 5-phosphate: step 2/3. The protein operates within bacterial outer membrane biogenesis; lipopolysaccharide biosynthesis. This is 2-dehydro-3-deoxyphosphooctonate aldolase from Bradyrhizobium diazoefficiens (strain JCM 10833 / BCRC 13528 / IAM 13628 / NBRC 14792 / USDA 110).